The sequence spans 748 residues: Tyrosine--tRNA ligase 2, cytoplasmic (748 aa).

An N-acetylmethionine modification is found at M1. Residues 441–449 (PSGRMHIAQ) carry the 'HIGH' region motif. L-tyrosine-binding residues include Y564, Q568, D571, and Q586. Positions 623–627 (KMSKS) match the 'KMSKS' region motif. K626 lines the ATP pocket.

It belongs to the class-I aminoacyl-tRNA synthetase family.

It is found in the cytoplasm. Its subcellular location is the cytosol. It catalyses the reaction tRNA(Tyr) + L-tyrosine + ATP = L-tyrosyl-tRNA(Tyr) + AMP + diphosphate + H(+). In terms of biological role, catalyzes the attachment of tyrosine to tRNA(Tyr) in a two-step reaction: tyrosine is first activated by ATP to form Tyr-AMP and then transferred to the acceptor end of tRNA(Tyr). In Arabidopsis thaliana (Mouse-ear cress), this protein is Tyrosine--tRNA ligase 2, cytoplasmic.